The chain runs to 265 residues: GTP cyclohydrolase FolE2 (265 aa).

It belongs to the GTP cyclohydrolase IV family.

It carries out the reaction GTP + H2O = 7,8-dihydroneopterin 3'-triphosphate + formate + H(+). The protein operates within cofactor biosynthesis; 7,8-dihydroneopterin triphosphate biosynthesis; 7,8-dihydroneopterin triphosphate from GTP: step 1/1. In terms of biological role, converts GTP to 7,8-dihydroneopterin triphosphate. This chain is GTP cyclohydrolase FolE2, found in Bordetella petrii (strain ATCC BAA-461 / DSM 12804 / CCUG 43448).